We begin with the raw amino-acid sequence, 183 residues long: Ribosome rescue factor SmrB (183 aa).

The 76-residue stretch at 98 to 173 (LDLHGLTQMQ…GDAALLVLIE (76 aa)) folds into the Smr domain.

It belongs to the SmrB family. Associates with collided ribosomes, but not with correctly translating polysomes.

Its function is as follows. Acts as a ribosome collision sensor. Detects stalled/collided disomes (pairs of ribosomes where the leading ribosome is stalled and a second ribosome has collided with it) and endonucleolytically cleaves mRNA at the 5' boundary of the stalled ribosome. Stalled/collided disomes form a new interface (primarily via the 30S subunits) that binds SmrB. Cleaved mRNA becomes available for tmRNA ligation, leading to ribosomal subunit dissociation and rescue of stalled ribosomes. The polypeptide is Ribosome rescue factor SmrB (Enterobacter sp. (strain 638)).